A 272-amino-acid polypeptide reads, in one-letter code: Short-chain dehydrogenase srdC (272 aa).

Residues isoleucine 15, aspartate 65, arginine 127, tyrosine 173, lysine 177, valine 206, and threonine 208 each coordinate NADP(+). Tyrosine 173 acts as the Proton donor in catalysis. Lysine 177 functions as the Lowers pKa of active site Tyr in the catalytic mechanism.

It belongs to the short-chain dehydrogenases/reductases (SDR) family.

In terms of biological role, short-chain dehydrogenase; part of the gene cluster that mediates the biosynthesis of sordarial, a salicylic aldehyde structurally related to the phytotoxin pyriculol. The most interesting aspect of this pathway is formation of an aromatic product from the highly reducing polyketide synthase srdA. SrdA synthesizes a reduced polyketide chain from one molecule of acetyl-CoA and five molecules of malonyl-CoA. The polyketide chain is then reductively released as an aldehyde. The oxidoreductases srdC, srdD and srdE then oxidize one of the hydroxy groups to facilitate the intramolecular aldol condensation, followed by dehydration to yield a salicylic aldehyde. This aldehyde can undergo facile reduction by endogenous reductases to yield the alcohol 1-hydroxy-2-hydroxymethyl-3-pent-1,3-dienylbenzene. The flavin-dependent srdI counteract against the propensity of the aldehydes to be reduced under physiological conditions and is responsible for reoxidizing 1-hydroxy-2-hydroxymethyl-3-pent-1,3-dienylbenzene back to the salicylic aldehyde. This salicylic aldehyde is then selectively epoxidized by the cupin-domain-containing oxidoreductase srdB to yield the epoxide, which can be hydrolyzed stereoselectively by the hydrolase srdG to give the final product sordarial. This Neurospora crassa (strain ATCC 24698 / 74-OR23-1A / CBS 708.71 / DSM 1257 / FGSC 987) protein is Short-chain dehydrogenase srdC.